The chain runs to 58 residues: Small ribosomal subunit protein bS21 (58 aa).

Residues 39-58 form a disordered region; sequence EKPSVKRKRKSEVARKRKKF. The span at 43–58 shows a compositional bias: basic residues; sequence VKRKRKSEVARKRKKF.

The protein belongs to the bacterial ribosomal protein bS21 family.

This is Small ribosomal subunit protein bS21 from Streptococcus pneumoniae (strain ATCC BAA-255 / R6).